The sequence spans 567 residues: Proline--tRNA ligase (567 aa).

This sequence belongs to the class-II aminoacyl-tRNA synthetase family. ProS type 1 subfamily. Homodimer.

It localises to the cytoplasm. The enzyme catalyses tRNA(Pro) + L-proline + ATP = L-prolyl-tRNA(Pro) + AMP + diphosphate. In terms of biological role, catalyzes the attachment of proline to tRNA(Pro) in a two-step reaction: proline is first activated by ATP to form Pro-AMP and then transferred to the acceptor end of tRNA(Pro). As ProRS can inadvertently accommodate and process non-cognate amino acids such as alanine and cysteine, to avoid such errors it has two additional distinct editing activities against alanine. One activity is designated as 'pretransfer' editing and involves the tRNA(Pro)-independent hydrolysis of activated Ala-AMP. The other activity is designated 'posttransfer' editing and involves deacylation of mischarged Ala-tRNA(Pro). The misacylated Cys-tRNA(Pro) is not edited by ProRS. This is Proline--tRNA ligase from Staphylococcus aureus (strain bovine RF122 / ET3-1).